The chain runs to 217 residues: MTVENTALTLKKRFRGYFPVVVDVETAGFNAQTDALLEICAVTLSMDENGDLHPASTIHFHVEPFDGANLEKEALEFNGIRDPFSPLRGAVTEQEALKEIYKLIRREQKAADCSRAIMVAHNAAFDLSFVNAANERCKLKRVPFHPFATFDTATLSGLAYGQTVLAKACKTAGMEFDNREAHSALYDTEKTAELFCGIVNKWKALGGWPLIEDENEK.

One can recognise an Exonuclease domain in the interval valine 20–phenylalanine 195. Residues aspartate 23, glutamate 25, histidine 182, and aspartate 187 each coordinate Mg(2+). The active-site Proton donor/acceptor is the histidine 182.

Belongs to the RNase T family. In terms of assembly, homodimer. Mg(2+) serves as cofactor.

Functionally, trims short 3' overhangs of a variety of RNA species, leaving a one or two nucleotide 3' overhang. Responsible for the end-turnover of tRNA: specifically removes the terminal AMP residue from uncharged tRNA (tRNA-C-C-A). Also appears to be involved in tRNA biosynthesis. The protein is Ribonuclease T of Vibrio vulnificus (strain CMCP6).